A 510-amino-acid chain; its full sequence is Internal alternative NAD(P)H-ubiquinone oxidoreductase A1, mitochondrial (510 aa).

The transit peptide at 1–48 (MLWIKNLARISQTTSSSVGNVFRNPESYTLSSRFCTALQKQQVTDTVQ) directs the protein to the mitochondrion. 75-105 (RVLVLGSGWAGCRVLKGIDTSIYDVVCVSPR) contacts FAD. Residue 242–278 (LHCVVVGGGPTGVEFSGELSDFIMKDVRQRYSHVKDD) participates in NAD(+) binding. Residues 501–510 (FVFGRDISRI) carry the Microbody targeting signal motif.

It belongs to the NADH dehydrogenase family. Requires FAD as cofactor. As to expression, expressed in seedlings, cotyledons, young leaves, stems and flowers and, to a lower extent, in roots and buds.

It is found in the mitochondrion inner membrane. Its subcellular location is the peroxisome. The enzyme catalyses a quinone + NADH + H(+) = a quinol + NAD(+). The catalysed reaction is a ubiquinone + NADH + H(+) = a ubiquinol + NAD(+). Functionally, alternative NADH-ubiquinone oxidoreductase which catalyzes the oxidation of mitochondrial NADH does not translocate protons across the inner mitochondrial membrane. This Arabidopsis thaliana (Mouse-ear cress) protein is Internal alternative NAD(P)H-ubiquinone oxidoreductase A1, mitochondrial (NDA1).